The following is a 490-amino-acid chain: 5'-3' exonuclease PLD3 (490 aa).

Topologically, residues 1 to 38 (MKPKLMYQELKVPAEEPASELPMNEIEAWKAAEKKARW) are cytoplasmic. The helical; Signal-anchor for type II membrane protein transmembrane segment at 39-59 (VLLVLILAVVGFGALMTQLFL) threads the bilayer. Over 60-490 (WEYGDLHLFG…DSVGNACRLL (431 aa)) the chain is Lumenal. 2 disulfides stabilise this stretch: Cys77/Cys239 and Cys81/Cys237. Asn97 and Asn132 each carry an N-linked (GlcNAc...) asparagine glycan. Residues 196 to 223 (THGVLHTKFWVVDQTHFYLGSANMDWRS) enclose the PLD phosphodiesterase 1 domain. Residues His201, Lys203, and Asp208 contribute to the active site. The active-site Proton donor is the His201. Phosphate-binding residues include His201 and Lys203. A phosphate-binding site is contributed by Asn218. 3 N-linked (GlcNAc...) asparagine glycosylation sites follow: Asn236, Asn284, and Asn387. A disulfide bond links Cys366 and Cys487. The region spanning 411–437 (YARVNHNKYMVTERATYIGTSNWSGSY) is the PLD phosphodiesterase 2 domain. His416 contributes to the phosphate binding site. His416 (nucleophile) is an active-site residue. Mg(2+) is bound at residue Phe438.

Belongs to the phospholipase D family. As to quaternary structure, homodimer. Interacts with APP. In terms of processing, N-glycosylated. Proteolytically processed to a soluble form that is stable within endosomes and lysosomes. During transport through the secretory pathway becomes proteolysed by cysteine proteases, thereby releasing a stable soluble lysosomal lumenal polypeptide, whereas the transmembrane-bound fragment is rapidly degraded. Its transport route to lysosomes involves ubiquitination and the ESCRT complex. Post-translationally, ubiquitinated. Ubiquitination mediates sorting into lysosomes.

The protein resides in the endoplasmic reticulum membrane. It is found in the lysosome lumen. It localises to the early endosome membrane. Its subcellular location is the late endosome membrane. The protein localises to the golgi apparatus membrane. The protein resides in the endosome membrane. It carries out the reaction Exonucleolytic cleavage in the 5'- to 3'-direction to yield nucleoside 3'-phosphates.. The catalysed reaction is a 5'-end 5'-dephospho-ribonucleotidyl-ribonucleotide-RNA + H2O = a ribonucleoside 3'-phosphate + a 5'-end dephospho-ribonucleoside-RNA + H(+). It catalyses the reaction a ribonucleoside 3'-phosphate-2'-3'-cyclophospho-GMP + H2O = a ribonucleoside 3'-phosphate + 2',3'-cyclophospho-GMP + H(+). The enzyme catalyses a 5'-end 5'-dephospho-2'-deoxyribonucleotidyl-2'-deoxyribonucleotide in single-stranded DNA + H2O = a 5'-end dephospho-2'-deoxyribonucleoside in single-stranded DNA + a 2'-deoxyribonucleoside 3'-phosphate + H(+). It carries out the reaction a 5'-end 5'-phospho-2'-deoxyribonucleotide in single-stranded DNA + H2O = a 5'-end 5'-dephospho-2'-deoxyribonucleotide in single-stranded DNA + phosphate. The catalysed reaction is a 3-lyso-sn-glycero-1-phospho-(3'-acyl-1'-sn-glycerol) + a 1-acyl-sn-glycerol = a 3-acyl-sn-glycero-1-phospho-(3'-acyl-1'-sn-glycerol) + glycerol. It catalyses the reaction 3-lyso-sn-glycero-1-phospho-(3'-(9Z-octadecenoyl)-1'-sn-glycerol) + 1-(9Z-octadecenoyl)-sn-glycerol = 3-(9Z-octadecenoyl)-sn-glycero-1-phospho-(3'-(9Z-octadecenoyl)-1'-sn-glycerol) + glycerol. 5'-&gt;3' exonuclease that hydrolyzes the phosphodiester bond of single-stranded DNA (ssDNA) and RNA molecules to form nucleoside 3'-monophosphates and 5'-end 5'-hydroxy deoxyribonucleotide/ribonucleotide fragments. Partially redundant with PLD4, can cleave all four nucleotides displaying higher efficiency for ssDNA and RNA fragments initiated with uridine and guanosine residues and lower efficiency for cytidine-initiated substrates. As a result, it does not always degrade polynucleotides to the single nucleotide level, it can stall at specific sites sparing certain fragments from exonucleolytic degradation. Processes self and pathogenic ssDNA and RNA molecules that reach the endolysosomal compartment via phagocytosis or autophagy and may serve as 'danger' signals for recognition by innate immune receptors such as toll-like receptors (TLRs). Degrades mitochondrial CpG-rich ssDNA fragments to prevent TLR9 activation and autoinflammatory response, but it can cleave viral RNA to generate ligands for TLR7 activation and initiate antiviral immune responses. In plasmacytoid dendritic cells, it cooperates with endonuclease RNASET2 to release 2',3'-cyclic guanosine monophosphate (2',3'-cGMP), a potent stimulatory ligand for TLR7. Produces 2',3'-cGMPs and cytidine-rich RNA fragments that occupy TLR7 ligand-binding pockets and trigger a signaling-competent state. Can exert polynucleotide phosphatase activity toward 5'-phosphorylated ssDNA substrates although at a slow rate. Transphosphatidylase that catalyzes the exchange with R to S stereo-inversion of the glycerol moiety between (S,R)-lysophosphatidylglycerol (LPG) and monoacylglycerol (MAG) substrates to yield (S,S)-bis(monoacylglycero)phosphate (BMP). Can synthesize a variety of (S,S)-BMPs representing the main phospholipid constituent of lysosomal intralumenal vesicle (ILV) membranes that bind acid hydrolases for lipid degradation. Regulates the homeostasis and interorganellar communication of the endolysosomal system with an overall impact on cellular removal of dysfunctional organelles via autophagy as well as proper protein and lipid turnover. May play a role in myotube formation in response to ER stress. The chain is 5'-3' exonuclease PLD3 (PLD3) from Bos taurus (Bovine).